Consider the following 808-residue polypeptide: Beta-catenin/armadillo-related protein 1 (808 aa).

The segment at 1-85 is involved in transcriptional activation; it reads MDLDPNLVIN…SSHLSGMSSM (85 aa). ARM repeat units lie at residues 118-160, 165-209, and 369-408; these read RAIP…NETK, CVIF…RAIS, and SDVPSKMKEELLLKSLLELVNSRNAVIRLYSAQTMSNLVA. The segment at 541-808 is involved in transcriptional activation; the sequence is NVQDVIEGVR…DQYPYRQGRF (268 aa). The disordered stretch occupies residues 702-808; sequence TYEGAGEQWS…DQYPYRQGRF (107 aa). Positions 723 to 736 are enriched in polar residues; the sequence is YCNSSGRDSSKTYN. The span at 737 to 750 shows a compositional bias: low complexity; the sequence is SPMYHSPPSMYPEY. Over residues 786 to 798 the composition is skewed to polar residues; sequence NIPSNQGPSSHLS.

The protein belongs to the beta-catenin family. As to quaternary structure, interacts with apr-1, axl-1, daf-16, lin-23, and pop-1 (via acidic region in N-terminus 1-44). Interacts (via ARM repeats) with pry-1.

It is found in the cytoplasm. The protein localises to the nucleus. It localises to the membrane. Its subcellular location is the cell junction. Its function is as follows. Participates in the Wnt signaling pathway which affects cell fate and may regulate the stem cell divisions of seam cells during larval development. Functions as a transcriptional activator but is dependent on the interaction with pop-1. Involved in maintaining lin-39 Hox expression and regulating glr-1 abundance at the synapses. Required for mab-5 expression during Q neuroblast migration and for oxidative stress-induced daf-16 signaling. Has roles in egg laying, vulva precursor cell fate determination, Q neuroblast migration, posterior ectodermal cell P12 specification, movement, body length, male tail development and dauer induction. Functionally redundant to wrm-1 and hmp-2. In Caenorhabditis briggsae, this protein is Beta-catenin/armadillo-related protein 1 (bar-1).